Consider the following 325-residue polypeptide: Beta-ketoacyl-[acyl-carrier-protein] synthase III (325 aa).

Active-site residues include cysteine 113 and histidine 250. An ACP-binding region spans residues 251–255 (QANIR). The active site involves asparagine 280.

It belongs to the thiolase-like superfamily. FabH family. As to quaternary structure, homodimer.

Its subcellular location is the cytoplasm. The enzyme catalyses malonyl-[ACP] + acetyl-CoA + H(+) = 3-oxobutanoyl-[ACP] + CO2 + CoA. Its pathway is lipid metabolism; fatty acid biosynthesis. Catalyzes the condensation reaction of fatty acid synthesis by the addition to an acyl acceptor of two carbons from malonyl-ACP. Catalyzes the first condensation reaction which initiates fatty acid synthesis and may therefore play a role in governing the total rate of fatty acid production. Possesses both acetoacetyl-ACP synthase and acetyl transacylase activities. Its substrate specificity determines the biosynthesis of branched-chain and/or straight-chain of fatty acids. This Streptococcus suis (strain 98HAH33) protein is Beta-ketoacyl-[acyl-carrier-protein] synthase III.